The following is a 224-amino-acid chain: Cytidylate kinase (224 aa).

Position 11-19 (11-19 (GPAAAGKST)) interacts with ATP.

It belongs to the cytidylate kinase family. Type 1 subfamily.

The protein localises to the cytoplasm. It catalyses the reaction CMP + ATP = CDP + ADP. The catalysed reaction is dCMP + ATP = dCDP + ADP. The sequence is that of Cytidylate kinase (cmk) from Bacillus subtilis (strain 168).